The sequence spans 120 residues: UPF0102 protein TWT_455 (120 aa).

This sequence belongs to the UPF0102 family.

The sequence is that of UPF0102 protein TWT_455 from Tropheryma whipplei (strain Twist) (Whipple's bacillus).